We begin with the raw amino-acid sequence, 132 residues long: UPF0299 membrane protein YohJ (132 aa).

4 helical membrane passes run 7 to 27, 31 to 51, 63 to 83, and 93 to 113; these read IIWQ…AGIF, LLPV…VLLA, GCYV…VGVM, and FGPV…VVSW.

It belongs to the UPF0299 family.

It is found in the cell inner membrane. This Shigella boydii serotype 18 (strain CDC 3083-94 / BS512) protein is UPF0299 membrane protein YohJ.